Consider the following 159-residue polypeptide: Large ribosomal subunit protein uL10 (159 aa).

Belongs to the universal ribosomal protein uL10 family. In terms of assembly, part of the ribosomal stalk of the 50S ribosomal subunit. The N-terminus interacts with L11 and the large rRNA to form the base of the stalk. The C-terminus forms an elongated spine to which L12 dimers bind in a sequential fashion forming a multimeric L10(L12)X complex.

Forms part of the ribosomal stalk, playing a central role in the interaction of the ribosome with GTP-bound translation factors. The sequence is that of Large ribosomal subunit protein uL10 from Campylobacter lari (strain RM2100 / D67 / ATCC BAA-1060).